A 150-amino-acid chain; its full sequence is MNKRREKGQSHSTRPPHPQPPQWLVFTPEEIELLIAELAKKGYGPSMIGIILRDQYGIPLVKPILGKGVSEVLREKGLHPPLPEDLLMLIRKAVNLRRHLDEHPKDYHAKKGLIDLESKIRRLVKYYKRRGVLPPDWKYDPEAAKLLVST.

The interval 1–22 (MNKRREKGQSHSTRPPHPQPPQ) is disordered.

It belongs to the universal ribosomal protein uS15 family. In terms of assembly, part of the 30S ribosomal subunit.

In Aeropyrum pernix (strain ATCC 700893 / DSM 11879 / JCM 9820 / NBRC 100138 / K1), this protein is Small ribosomal subunit protein uS15.